The sequence spans 190 residues: NADH-quinone oxidoreductase subunit B (190 aa).

[4Fe-4S] cluster contacts are provided by Cys-67, Cys-68, Cys-132, and Cys-162.

It belongs to the complex I 20 kDa subunit family. In terms of assembly, NDH-1 is composed of 14 different subunits. Subunits NuoB, C, D, E, F, and G constitute the peripheral sector of the complex. It depends on [4Fe-4S] cluster as a cofactor.

Its subcellular location is the cell inner membrane. The catalysed reaction is a quinone + NADH + 5 H(+)(in) = a quinol + NAD(+) + 4 H(+)(out). NDH-1 shuttles electrons from NADH, via FMN and iron-sulfur (Fe-S) centers, to quinones in the respiratory chain. The immediate electron acceptor for the enzyme in this species is believed to be ubiquinone. Couples the redox reaction to proton translocation (for every two electrons transferred, four hydrogen ions are translocated across the cytoplasmic membrane), and thus conserves the redox energy in a proton gradient. This Anaplasma marginale (strain Florida) protein is NADH-quinone oxidoreductase subunit B.